We begin with the raw amino-acid sequence, 195 residues long: Imidazole glycerol phosphate synthase subunit HisH (195 aa).

Positions 1–193 (MIAIVDYGVG…RETTCNSTQQ (193 aa)) constitute a Glutamine amidotransferase type-1 domain. The Nucleophile role is filled by Cys-78. Active-site residues include His-168 and Glu-170.

Heterodimer of HisH and HisF.

It localises to the cytoplasm. The enzyme catalyses 5-[(5-phospho-1-deoxy-D-ribulos-1-ylimino)methylamino]-1-(5-phospho-beta-D-ribosyl)imidazole-4-carboxamide + L-glutamine = D-erythro-1-(imidazol-4-yl)glycerol 3-phosphate + 5-amino-1-(5-phospho-beta-D-ribosyl)imidazole-4-carboxamide + L-glutamate + H(+). The catalysed reaction is L-glutamine + H2O = L-glutamate + NH4(+). The protein operates within amino-acid biosynthesis; L-histidine biosynthesis; L-histidine from 5-phospho-alpha-D-ribose 1-diphosphate: step 5/9. In terms of biological role, IGPS catalyzes the conversion of PRFAR and glutamine to IGP, AICAR and glutamate. The HisH subunit catalyzes the hydrolysis of glutamine to glutamate and ammonia as part of the synthesis of IGP and AICAR. The resulting ammonia molecule is channeled to the active site of HisF. The chain is Imidazole glycerol phosphate synthase subunit HisH from Exiguobacterium sibiricum (strain DSM 17290 / CCUG 55495 / CIP 109462 / JCM 13490 / 255-15).